The primary structure comprises 494 residues: Splicing regulatory glutamine/lysine-rich protein 1 (494 aa).

The 77-residue stretch at 69 to 145 folds into the RRM domain; sequence RTVYVGNLNS…RPLKINHSNN (77 aa). Residues Ser174 and Ser187 each carry the phosphoserine modification. Positions 176-494 are disordered; sequence ISAAIEPESG…ESPCSKADAV (319 aa). Residues 183 to 192 are compositionally biased toward basic and acidic residues; it reads ESGKSNERKG. The segment covering 193-262 has biased composition (basic residues); the sequence is GRSRSHTRSK…KSRSRSRSRD (70 aa). A compositionally biased stretch (basic and acidic residues) spans 263–340; the sequence is KRKDTREKVK…DRSKETDEKR (78 aa). Thr348 carries the post-translational modification Phosphothreonine. Residues 357 to 373 show a composition bias toward basic residues; it reads RRSRSTSRERRRRRSRS. Basic and acidic residues predominate over residues 404 to 474; sequence REKERDHISD…SPRTEDEGKV (71 aa). Positions 476–486 are enriched in polar residues; the sequence is HNGNCQPNEES. Residue Lys490 forms a Glycyl lysine isopeptide (Lys-Gly) (interchain with G-Cter in SUMO2) linkage.

Belongs to the splicing factor SR family. In terms of assembly, homodimer. Binds SFRS1, SFRS2, SFRS3 and SFRS6. Interacts with the spliceosome. Interacts with SREK1IP1.

The protein resides in the nucleus. Participates in the regulation of alternative splicing by modulating the activity of other splice facors. Inhibits the splicing activity of SFRS1, SFRS2 and SFRS6. Augments the splicing activity of SFRS3. The protein is Splicing regulatory glutamine/lysine-rich protein 1 (Srek1) of Mus musculus (Mouse).